We begin with the raw amino-acid sequence, 469 residues long: MSYKSHQLIKDHDVKWVDLRFTDTKGKQQHVTMPARDALDDEFFEAGKMFDGSSIAGWKGIEASDMILMPDDSTAVLDPFTEEPTLILVCDIIEPSTMQGYERDPRNIAKRAEEYLKSTGIGDTVFVGPEPEFFIFDEVKFKSDISGSMFKIFSEQASWNTDADIESGNKGHRPGVKGGYFPVPPVDHDHEIRTAMCNALEEMGLVVEVHHHEVATAGQNEIGVKFNTLVAKADEVQTLKYCVHNVADAYGKTVTFMPKPLYGDNGSGMHVHMSISKDGKNTFAGEGYAGLSETALYFIGGIIKHGKALNGFTNPSTNSYKRLVPGFEAPVMLAYSARNRSASIRIPYVSSPKARRIEARFPDPAANPYLAFAALLMAGLDGIQNKIHPGDAADKNLYDLPPEEAKEIPQVCGSLKEALEELDKGRAFLTKGGVFTDEFIDAYIELKSEEEIKVRTFVHPLEYDLYYSV.

The region spanning 12 to 97 (HDVKWVDLRF…LVCDIIEPST (86 aa)) is the GS beta-grasp domain. The 365-residue stretch at 105 to 469 (PRNIAKRAEE…PLEYDLYYSV (365 aa)) folds into the GS catalytic domain. The Mg(2+) site is built by Glu-130 and Glu-132. Glu-208 is a binding site for ATP. Mg(2+) is bound by residues Glu-213 and Glu-221. L-glutamate contacts are provided by residues 265-266 (NG) and Gly-266. A Mg(2+)-binding site is contributed by His-270. ATP is bound by residues 272 to 274 (HMS) and Ser-274. L-glutamate contacts are provided by Arg-322, Glu-328, and Arg-340. ATP is bound by residues Arg-340, Arg-345, and Lys-353. Glu-358 is a Mg(2+) binding site. Arg-360 is a binding site for L-glutamate. The residue at position 398 (Tyr-398) is an O-AMP-tyrosine.

The protein belongs to the glutamine synthetase family. Oligomer of 12 subunits arranged in the form of two hexameric ring. Mg(2+) is required as a cofactor.

The protein resides in the cytoplasm. The catalysed reaction is L-glutamate + NH4(+) + ATP = L-glutamine + ADP + phosphate + H(+). Its activity is regulated as follows. The activity of this enzyme could be controlled by adenylation under conditions of abundant glutamine. Catalyzes the ATP-dependent biosynthesis of glutamine from glutamate and ammonia. The chain is Glutamine synthetase from Pseudomonas aeruginosa (strain ATCC 15692 / DSM 22644 / CIP 104116 / JCM 14847 / LMG 12228 / 1C / PRS 101 / PAO1).